The sequence spans 93 residues: Small ribosomal subunit protein bS18 (93 aa).

The protein belongs to the bacterial ribosomal protein bS18 family. In terms of assembly, part of the 30S ribosomal subunit. Forms a tight heterodimer with protein bS6.

Functionally, binds as a heterodimer with protein bS6 to the central domain of the 16S rRNA, where it helps stabilize the platform of the 30S subunit. This chain is Small ribosomal subunit protein bS18, found in Paracidovorax citrulli (strain AAC00-1) (Acidovorax citrulli).